A 179-amino-acid chain; its full sequence is Protein GrpE (179 aa).

Positions 1-23 are disordered; the sequence is MSEEIKEQNVQDAQNENLAPDSV.

This sequence belongs to the GrpE family. As to quaternary structure, homodimer.

The protein localises to the cytoplasm. Its function is as follows. Participates actively in the response to hyperosmotic and heat shock by preventing the aggregation of stress-denatured proteins, in association with DnaK and GrpE. It is the nucleotide exchange factor for DnaK and may function as a thermosensor. Unfolded proteins bind initially to DnaJ; upon interaction with the DnaJ-bound protein, DnaK hydrolyzes its bound ATP, resulting in the formation of a stable complex. GrpE releases ADP from DnaK; ATP binding to DnaK triggers the release of the substrate protein, thus completing the reaction cycle. Several rounds of ATP-dependent interactions between DnaJ, DnaK and GrpE are required for fully efficient folding. This is Protein GrpE from Campylobacter curvus (strain 525.92).